A 260-amino-acid polypeptide reads, in one-letter code: Ribonuclease PH (260 aa).

Residues R88 and 126 to 128 (GTR) each bind phosphate.

This sequence belongs to the RNase PH family. Homohexameric ring arranged as a trimer of dimers.

The enzyme catalyses tRNA(n+1) + phosphate = tRNA(n) + a ribonucleoside 5'-diphosphate. In terms of biological role, phosphorolytic 3'-5' exoribonuclease that plays an important role in tRNA 3'-end maturation. Removes nucleotide residues following the 3'-CCA terminus of tRNAs; can also add nucleotides to the ends of RNA molecules by using nucleoside diphosphates as substrates, but this may not be physiologically important. Probably plays a role in initiation of 16S rRNA degradation (leading to ribosome degradation) during starvation. In Mycobacterium sp. (strain JLS), this protein is Ribonuclease PH.